A 288-amino-acid polypeptide reads, in one-letter code: 33 kDa chaperonin (288 aa).

2 disulfides stabilise this stretch: Cys236/Cys238 and Cys269/Cys272.

It belongs to the HSP33 family. Under oxidizing conditions two disulfide bonds are formed involving the reactive cysteines. Under reducing conditions zinc is bound to the reactive cysteines and the protein is inactive.

The protein localises to the cytoplasm. Functionally, redox regulated molecular chaperone. Protects both thermally unfolding and oxidatively damaged proteins from irreversible aggregation. Plays an important role in the bacterial defense system toward oxidative stress. This Lactococcus lactis subsp. lactis (strain IL1403) (Streptococcus lactis) protein is 33 kDa chaperonin.